Consider the following 159-residue polypeptide: Cytochrome c-type biogenesis protein CcmE (159 aa).

At 1–8 (MNPRRKKR) the chain is on the cytoplasmic side. Residues 9 to 29 (LLVIVAVLFGIGASIGLVLYA) traverse the membrane as a helical; Signal-anchor for type II membrane protein segment. Residues 30–159 (LQENINLFYT…KPKYNLDSGN (130 aa)) are Periplasmic-facing. Residues histidine 130 and tyrosine 134 each coordinate heme.

This sequence belongs to the CcmE/CycJ family.

The protein resides in the cell inner membrane. Heme chaperone required for the biogenesis of c-type cytochromes. Transiently binds heme delivered by CcmC and transfers the heme to apo-cytochromes in a process facilitated by CcmF and CcmH. The chain is Cytochrome c-type biogenesis protein CcmE from Pseudoalteromonas translucida (strain TAC 125).